A 340-amino-acid chain; its full sequence is MTQLSPVAVSMGDPAGIGPEIILKAWQSWRRRNGVPPLIALGDIDAFTATAQALGLPAPCPLPTPTREAAETLDGLPVFDVGVKIAAPVRPGQPDTANAACTKAAIETGVRLALDGQVSALVTAPIAKSVMYEAGFAFPGHTEFLAELCADHPVDGPKGPAMMLAGGGLRVVLVTIHEPLVRALSLITPQRVEATARITDAALRRDFGIARPRLALAGLNPHAGEGGALGDEEIDILDPLAARLRADGIDITDAQPPDTLFHAEARAGYDAAICLYHDQGLIPVKTLDFHGGVNITLGLPIVRTSPDHGTAFNIAGQGVARPDSLLAALEQAVKIAECRA.

Substrate-binding residues include His-141 and Thr-142. A divalent metal cation contacts are provided by His-177, His-222, and His-277. Positions 285, 294, and 303 each coordinate substrate.

It belongs to the PdxA family. In terms of assembly, homodimer. Zn(2+) is required as a cofactor. Requires Mg(2+) as cofactor. It depends on Co(2+) as a cofactor.

Its subcellular location is the cytoplasm. It carries out the reaction 4-(phosphooxy)-L-threonine + NAD(+) = 3-amino-2-oxopropyl phosphate + CO2 + NADH. Its pathway is cofactor biosynthesis; pyridoxine 5'-phosphate biosynthesis; pyridoxine 5'-phosphate from D-erythrose 4-phosphate: step 4/5. In terms of biological role, catalyzes the NAD(P)-dependent oxidation of 4-(phosphooxy)-L-threonine (HTP) into 2-amino-3-oxo-4-(phosphooxy)butyric acid which spontaneously decarboxylates to form 3-amino-2-oxopropyl phosphate (AHAP). This is 4-hydroxythreonine-4-phosphate dehydrogenase from Maricaulis maris (strain MCS10) (Caulobacter maris).